The primary structure comprises 449 residues: Elongation factor 1-alpha 1 (449 aa).

The region spanning 5-230 (KFHINIVVIG…DQINEPKRPS (226 aa)) is the tr-type G domain. A G1 region spans residues 14–21 (GHVDSGKS). Residue 14–21 (GHVDSGKS) participates in GTP binding. The residue at position 55 (lysine 55) is an N6,N6-dimethyllysine. Residues 70–74 (GITID) form a G2 region. Lysine 79 is modified (N6,N6,N6-trimethyllysine). The segment at 91–94 (DAPG) is G3. GTP is bound by residues 91-95 (DAPGH) and 153-156 (NKMD). The segment at 153–156 (NKMD) is G4. The residue at position 187 (lysine 187) is an N6,N6,N6-trimethyllysine. Residues 194–196 (SGF) are G5. Lysine 261 carries the N6-methyllysine modification. An N6,N6,N6-trimethyllysine mark is found at lysine 306 and lysine 396. Residues lysine 438 and lysine 441 each participate in a glycyl lysine isopeptide (Lys-Gly) (interchain with G-Cter in ubiquitin) cross-link.

It belongs to the TRAFAC class translation factor GTPase superfamily. Classic translation factor GTPase family. EF-Tu/EF-1A subfamily.

Its subcellular location is the cytoplasm. This protein promotes the GTP-dependent binding of aminoacyl-tRNA to the A-site of ribosomes during protein biosynthesis. The sequence is that of Elongation factor 1-alpha 1 (A1) from Arabidopsis thaliana (Mouse-ear cress).